A 440-amino-acid polypeptide reads, in one-letter code: (S)-N-methylcoclaurine 3'-hydroxylase-like protein (440 aa).

A helical; Signal-anchor for type II membrane protein transmembrane segment spans residues 2–21 (EIVTVALIAIVFTTFLYLIV). Heme is bound at residue Cys430.

Belongs to the cytochrome P450 family. Heme serves as cofactor.

It is found in the membrane. Its function is as follows. Involved in the biosynthesis of benzylisoquinoline alkaloids. Probably involved in papaverine biosynthesis since its transcripts are abundant only in cultivars with substantial papaverine accumulation. May catalyze the 3'-hydroxylation of (S)-coclaurine. This chain is (S)-N-methylcoclaurine 3'-hydroxylase-like protein, found in Papaver somniferum (Opium poppy).